The following is a 404-amino-acid chain: MDFNMKKLASDAGIFFTRAVQFTEEKFGQAEKTELDAHFENLLARADSTKNWTERILRQTEVLLQPNPSARVEEFLYEKLDRKVPSRVTNGELLAQYMAEAASELGPNTPYGKTLMKVSEAEKRLGAAERDFIHTASLSFLTPLRNFLEGDWKTISKERRLLQNRRLDLDACKARLKKAKAAEAKATCEGDTVPDFQETRPRNYILSASASALWNDEVDKAEQELRAAQTEFDRQAEVTRLLLEGISSAHVNHLRCLHEFVKSQTTYYAQCYRHMLDLQKQLGSSQGAIFPGTFVGTTEPASPPLSSTSPTTTAATMPVVPTGAGLAPPEEAALCLEEVAPPASGTRKARVLYDYEAADSSELALLADELITVYSLPGMDPDWLIGERGNKKGKVPVTYLELLS.

Methionine 1 is modified (N-acetylmethionine). A membrane-binding amphipathic helix region spans residues 1–27 (MDFNMKKLASDAGIFFTRAVQFTEEKF). Serine 10 carries the phosphoserine modification. The BAR domain maps to 24–291 (EEKFGQAEKT…LGSSQGAIFP (268 aa)). Positions 209-239 (SASALWNDEVDKAEQELRAAQTEFDRQAEVT) form a coiled coil. The region spanning 344–404 (SGTRKARVLY…VPVTYLELLS (61 aa)) is the SH3 domain. Serine 404 carries the phosphoserine modification.

Belongs to the endophilin family. As to quaternary structure, homodimer, and heterodimer with SH3GLB1.

It is found in the cytoplasm. The sequence is that of Endophilin-B2 from Rattus norvegicus (Rat).